A 1382-amino-acid polypeptide reads, in one-letter code: ABC-type transporter atr1 (1382 aa).

The span at 1-12 (MRFRSDSRADHQ) shows a compositional bias: basic and acidic residues. Residues 1–56 (MRFRSDSRADHQHPKKQGSMDPDTIQALKYQDRSSSSSSNNKPKEKVGSASTSPSP) form a disordered region. Asparagine 62 carries N-linked (GlcNAc...) asparagine glycosylation. The next 6 helical transmembrane spans lie at 101–121 (LFGTGMAIAAGAAQPLMNIFI), 159–179 (LILLYLGIGMFFASMLYMAVF), 233–253 (LPMAIMYFSTFVTAAAVAFAF), 259–279 (LVLLPIAPLILLAGGVMGALT), 339–359 (GVGVGALLFIIYAGYALAFFY), and 374–394 (IVSVVFANFAGAFAIANLFSM). The 300-residue stretch at 101–400 (LFGTGMAIAA…LFSMIENFTM (300 aa)) folds into the ABC transmembrane type-1 1 domain. An N-linked (GlcNAc...) asparagine glycan is attached at asparagine 397. The ABC transporter 1 domain occupies 445–688 (LKLDHVHFAY…PNGTFASMLR (244 aa)). ATP is bound at residue 480–487 (GLSGSGKS). Asparagine 680 carries N-linked (GlcNAc...) asparagine glycosylation. Positions 738 to 768 (SVKPKDPSKNFEPPGESYASPAADGVKQDAP) are disordered. The ABC transmembrane type-1 2 domain maps to 797–1094 (LGSLCAAIIG…IFNYSADFSS (298 aa)). The helical transmembrane segment at 800-820 (LCAAIIGAVYPVYAILFGTAI) threads the bilayer. Asparagine 827 carries an N-linked (GlcNAc...) asparagine glycan. Residues 848 to 868 (ISSGSFFIVAVGCAFISFYHV) traverse the membrane as a helical segment. A glycan (N-linked (GlcNAc...) asparagine) is linked at asparagine 903. Transmembrane regions (helical) follow at residues 911-931 (SLSVLSQGIYGGVGPTLGSIV) and 951-973 (LALVVIASTPLTITAGLLRLRVL). A glycan (N-linked (GlcNAc...) asparagine) is linked at asparagine 1020. 2 consecutive transmembrane segments (helical) span residues 1034–1054 (VLFGLSQCVQLLVTALAFWYG) and 1067–1087 (GFFTILISVVYGSVQAGNIFN). One can recognise an ABC transporter 2 domain in the interval 1136 to 1377 (IALKEVTFRY…DGLFALMARL (242 aa)). 1171–1178 (GGSGSGKS) contributes to the ATP binding site. Asparagine 1324 is a glycosylation site (N-linked (GlcNAc...) asparagine).

This sequence belongs to the ABC transporter superfamily. ABCB family. Multidrug resistance exporter (TC 3.A.1.201) subfamily.

It localises to the cell membrane. ABC-type transporter; part of the gene cluster that mediates the biosynthesis of the glycolipid biosurfactant ustilagic acid (UA). UA is a secreted cellobiose glycolipid that is toxic for many microorganisms and confers biocontrol activity to U.maydis. Export of UA is presumably catalyzed by the ABC transporter atr1. Atr1 appears to be quite unspecific, as many of the UA derivatives produced by cluster mutant strains are readily exported. The protein is ABC-type transporter atr1 of Mycosarcoma maydis (Corn smut fungus).